A 375-amino-acid polypeptide reads, in one-letter code: DNA replication and repair protein RecF (375 aa).

Residue 30–37 (GENAQGKT) participates in ATP binding.

Belongs to the RecF family.

It is found in the cytoplasm. Its function is as follows. The RecF protein is involved in DNA metabolism; it is required for DNA replication and normal SOS inducibility. RecF binds preferentially to single-stranded, linear DNA. It also seems to bind ATP. This is DNA replication and repair protein RecF from Bacillus cereus (strain ZK / E33L).